The chain runs to 614 residues: DNA double-strand break repair protein Mre11 (614 aa).

4 residues coordinate Mn(2+): Asp12, His14, Asp53, and Asn88. His89 (proton donor) is an active-site residue. Residues His158, Asp189, and His191 each contribute to the Mn(2+) site. 2 disordered regions span residues Ala393 to Ile434 and Ala487 to Leu614. Low complexity predominate over residues Pro411 to Ser425. Basic and acidic residues-rich tracts occupy residues Ala487–Pro502, Val535–Gly558, and Gly568–Val591.

It belongs to the MRE11/RAD32 family. Homodimer. Forms a heterotetramer composed of two Mre11 subunits and two Rad50 subunits. Mn(2+) serves as cofactor.

With respect to regulation, nuclease activity is regulated by Rad50. Its function is as follows. Part of the Rad50/Mre11 complex, which is involved in the early steps of DNA double-strand break (DSB) repair. The complex may facilitate opening of the processed DNA ends to aid in the recruitment of HerA and NurA. Mre11 binds to DSB ends and has both double-stranded 3'-5' exonuclease activity and single-stranded endonuclease activity. This Methanosarcina acetivorans (strain ATCC 35395 / DSM 2834 / JCM 12185 / C2A) protein is DNA double-strand break repair protein Mre11.